The chain runs to 289 residues: Testis-expressed protein 26 (289 aa).

The tract at residues 1–26 (MEQPGPRAPDPSLCHHNLQPTDDPNW) is disordered. 5 mn regions span residues 30 to 42 (ATTM…PKTG), 69 to 83 (QTQY…SHSK), 144 to 157 (ISLT…RSKA), 179 to 193 (DTEF…AKIP), and 233 to 247 (QTTY…YPDF).

In Homo sapiens (Human), this protein is Testis-expressed protein 26 (TEX26).